We begin with the raw amino-acid sequence, 90 residues long: Small ribosomal subunit protein uS17 (90 aa).

This sequence belongs to the universal ribosomal protein uS17 family. In terms of assembly, part of the 30S ribosomal subunit.

In terms of biological role, one of the primary rRNA binding proteins, it binds specifically to the 5'-end of 16S ribosomal RNA. The sequence is that of Small ribosomal subunit protein uS17 from Treponema denticola (strain ATCC 35405 / DSM 14222 / CIP 103919 / JCM 8153 / KCTC 15104).